We begin with the raw amino-acid sequence, 221 residues long: MTKTADLKGSNFTLSVLHLPNDDVALALNMLEQKVAQAPSFFASAPVVVNIENVSNEINFVELKSGVERTGMIPVGITGCKDKEKQAQATAAGFAIMTSFTPQQVTQKANMQPTKVIKTPIRSGQQIYAKDADLVILNHVSPGAEVIADGSIHIHGTLRGRAIAGASGQAEAKVFCKNLQAELISIAGNYWLSDQIDKEYWHQNVMITMVEDRIQIDTLTL.

The protein belongs to the MinC family. In terms of assembly, interacts with MinD and FtsZ.

Cell division inhibitor that blocks the formation of polar Z ring septums. Rapidly oscillates between the poles of the cell to destabilize FtsZ filaments that have formed before they mature into polar Z rings. Prevents FtsZ polymerization. In Aliivibrio fischeri (strain MJ11) (Vibrio fischeri), this protein is Probable septum site-determining protein MinC.